Here is a 302-residue protein sequence, read N- to C-terminus: Protoheme IX farnesyltransferase (302 aa).

9 consecutive transmembrane segments (helical) span residues 24–44, 48–68, 97–117, 120–140, 147–167, 174–194, 221–241, 245–265, and 282–302; these read VVSLVTFTAVTGAVLAYFSGY, FFSVFTAIFCIAVGSGAAGAL, AALVFGLVLFALSVLLMELAV, LSAVLLSVAVFYYSVIYTVYL, NIVVGGGAGAFPPMIGWAAVA, SLVLFLIIFLWTPPHFWALAL, ILCYSVLLFITSILPYLLRFS, YMIVAFILGLVFLYYAINVYL, and FLLFGVFILDAALSTALGMLI.

This sequence belongs to the UbiA prenyltransferase family. Protoheme IX farnesyltransferase subfamily.

Its subcellular location is the cell inner membrane. It catalyses the reaction heme b + (2E,6E)-farnesyl diphosphate + H2O = Fe(II)-heme o + diphosphate. The protein operates within porphyrin-containing compound metabolism; heme O biosynthesis; heme O from protoheme: step 1/1. Its function is as follows. Converts heme B (protoheme IX) to heme O by substitution of the vinyl group on carbon 2 of heme B porphyrin ring with a hydroxyethyl farnesyl side group. In Neorickettsia sennetsu (strain ATCC VR-367 / Miyayama) (Ehrlichia sennetsu), this protein is Protoheme IX farnesyltransferase.